The chain runs to 88 residues: Small ribosomal subunit protein bS18 (88 aa).

Belongs to the bacterial ribosomal protein bS18 family. Part of the 30S ribosomal subunit. Forms a tight heterodimer with protein bS6.

Functionally, binds as a heterodimer with protein bS6 to the central domain of the 16S rRNA, where it helps stabilize the platform of the 30S subunit. The sequence is that of Small ribosomal subunit protein bS18 from Syntrophus aciditrophicus (strain SB).